The following is a 156-amino-acid chain: Small ribosomal subunit protein uS7 (156 aa).

Belongs to the universal ribosomal protein uS7 family. Part of the 30S ribosomal subunit. Contacts proteins S9 and S11.

One of the primary rRNA binding proteins, it binds directly to 16S rRNA where it nucleates assembly of the head domain of the 30S subunit. Is located at the subunit interface close to the decoding center, probably blocks exit of the E-site tRNA. The sequence is that of Small ribosomal subunit protein uS7 from Mycoplasma mobile (strain ATCC 43663 / 163K / NCTC 11711) (Mesomycoplasma mobile).